The sequence spans 141 residues: Large ribosomal subunit protein uL16 (141 aa).

A compositionally biased stretch (basic residues) spans 1–17; sequence MLQPKRTKYRKVQKGRM. Residues 1-29 are disordered; that stretch reads MLQPKRTKYRKVQKGRMKGNSQRGHELSN.

This sequence belongs to the universal ribosomal protein uL16 family. As to quaternary structure, part of the 50S ribosomal subunit.

Functionally, binds 23S rRNA and is also seen to make contacts with the A and possibly P site tRNAs. In Flavobacterium johnsoniae (strain ATCC 17061 / DSM 2064 / JCM 8514 / BCRC 14874 / CCUG 350202 / NBRC 14942 / NCIMB 11054 / UW101) (Cytophaga johnsonae), this protein is Large ribosomal subunit protein uL16.